A 266-amino-acid polypeptide reads, in one-letter code: Diphthine synthase (266 aa).

S-adenosyl-L-methionine contacts are provided by residues L9, D85, I88, 113-114 (TA), L168, A210, and H235.

Belongs to the diphthine synthase family. As to quaternary structure, homodimer.

The catalysed reaction is 2-[(3S)-amino-3-carboxypropyl]-L-histidyl-[translation elongation factor 2] + 3 S-adenosyl-L-methionine = diphthine-[translation elongation factor 2] + 3 S-adenosyl-L-homocysteine + 3 H(+). The protein operates within protein modification; peptidyl-diphthamide biosynthesis. S-adenosyl-L-methionine-dependent methyltransferase that catalyzes the trimethylation of the amino group of the modified target histidine residue in translation elongation factor 2 (EF-2), to form an intermediate called diphthine. The three successive methylation reactions represent the second step of diphthamide biosynthesis. The chain is Diphthine synthase from Natronomonas pharaonis (strain ATCC 35678 / DSM 2160 / CIP 103997 / JCM 8858 / NBRC 14720 / NCIMB 2260 / Gabara) (Halobacterium pharaonis).